A 388-amino-acid chain; its full sequence is Lipid-A-disaccharide synthase (388 aa).

Belongs to the LpxB family.

It carries out the reaction a lipid X + a UDP-2-N,3-O-bis[(3R)-3-hydroxyacyl]-alpha-D-glucosamine = a lipid A disaccharide + UDP + H(+). It functions in the pathway bacterial outer membrane biogenesis; LPS lipid A biosynthesis. Condensation of UDP-2,3-diacylglucosamine and 2,3-diacylglucosamine-1-phosphate to form lipid A disaccharide, a precursor of lipid A, a phosphorylated glycolipid that anchors the lipopolysaccharide to the outer membrane of the cell. The chain is Lipid-A-disaccharide synthase from Burkholderia pseudomallei (strain 1710b).